The chain runs to 291 residues: Undecaprenyl-diphosphatase (291 aa).

Helical transmembrane passes span 1-21, 48-68, 102-122, 126-146, 162-182, 203-223, 231-251, and 267-287; these read MFII…LTEF, SAFT…AWVF, LHVL…DDFI, LFSV…MIIA, ISYF…WPGF, SDFT…LSLL, IADI…GLIA, and FAIY…GFGI.

This sequence belongs to the UppP family.

The protein localises to the cell membrane. It catalyses the reaction di-trans,octa-cis-undecaprenyl diphosphate + H2O = di-trans,octa-cis-undecaprenyl phosphate + phosphate + H(+). Its function is as follows. Catalyzes the dephosphorylation of undecaprenyl diphosphate (UPP). Confers resistance to bacitracin. The sequence is that of Undecaprenyl-diphosphatase from Staphylococcus aureus (strain USA300).